Consider the following 324-residue polypeptide: Putative HTH-type transcriptional regulatory protein UNCMA_15260 (324 aa).

The HTH cro/C1-type domain occupies 132-189 (LRSLREAKNISLGELAMALGVSRRTISKYESGMNATIEAALKLEEILDAPIACPVNMI). The segment at residues 143-162 (LGELAMALGVSRRTISKYES) is a DNA-binding region (H-T-H motif).

The sequence is that of Putative HTH-type transcriptional regulatory protein UNCMA_15260 from Methanocella arvoryzae (strain DSM 22066 / NBRC 105507 / MRE50).